A 1121-amino-acid chain; its full sequence is Putative ATP-dependent RNA helicase ECM32 (1121 aa).

Residues 157–187 are disordered; that stretch reads NSTRKPRKKGGRRVGRGKKGRKGAKIKKEKK. The span at 160–184 shows a compositional bias: basic residues; sequence RKPRKKGGRRVGRGKKGRKGAKIKK. Phosphoserine is present on Ser-227. Positions 233–452 are disordered; it reads AKVSKSETSR…NQEKNNGKTK (220 aa). A compositionally biased stretch (basic residues) spans 251 to 263; the sequence is NKGKGNKANHKKN. A compositionally biased stretch (polar residues) spans 278-287; that stretch reads IRNNVRNSQP. Residues 307 to 316 show a composition bias toward basic and acidic residues; the sequence is GKNESVDKHQ. Over residues 323-336 the composition is skewed to low complexity; the sequence is LNGNGSGSTNTTGL. Residues 342–363 show a composition bias toward basic and acidic residues; the sequence is DHAGQKTKGNDKTGNKNPREAK. A compositionally biased stretch (polar residues) spans 376-413; the sequence is KSNNQPNKGTSRWTIGSDTESSREPSISPNENTTSITK. Ser-392 is subject to Phosphoserine. The span at 426-452 shows a compositional bias: basic and acidic residues; it reads LNEKSKTTTMPKKLETKNQEKNNGKTK. A Phosphothreonine modification is found at Thr-465. Residue 670–677 participates in ATP binding; the sequence is GPPGTGKT.

Belongs to the DNA2/NAM7 helicase family. Interacts with the peptidyl release factors SUP35 and weakly with SUP45.

The protein localises to the cytoplasm. It catalyses the reaction ATP + H2O = ADP + phosphate + H(+). Functionally, probable RNA helicase, which may be involved in modulation of the translation termination process. Probably unwinds double-stranded RNA. In vitro, unwinds covalently closed, circular DNA in the presence of a DNA topoisomerase TOP1 and replication factor-A protein RFA1. The chain is Putative ATP-dependent RNA helicase ECM32 (ECM32) from Saccharomyces cerevisiae (strain ATCC 204508 / S288c) (Baker's yeast).